We begin with the raw amino-acid sequence, 432 residues long: Phosphoprotein associated with glycosphingolipid-enriched microdomains 1 (432 aa).

Over 1-16 (MGPAGSLLGSGQMQIT) the chain is Extracellular. A helical; Signal-anchor for type III membrane protein transmembrane segment spans residues 17-37 (LWGSLAAVAIFFVITFLIFLC). Residues Cys37 and Cys40 are each lipidated (S-palmitoyl cysteine). Over 38 to 432 (SSCDREKKPR…LQQGRDITRL (395 aa)) the chain is Cytoplasmic. Phosphoserine occurs at positions 50 and 61. Tyr105 is modified (phosphotyrosine; by LYN). Over residues 110–122 (TSASDLLDSQDST) the composition is skewed to polar residues. Positions 110 to 137 (TSASDLLDSQDSTGKPKCHQSRELPRIP) are disordered. A phosphotyrosine mark is found at Tyr163, Tyr181, and Tyr227. Disordered stretches follow at residues 197-230 (EKGHSGKAKSTSASKELPGPQTEGKAEFAEYASV) and 244-432 (SILG…ITRL). Basic and acidic residues predominate over residues 220–230 (GKAEFAEYASV). The residue at position 229 (Ser229) is a Phosphoserine. The span at 316–356 (MYSSVNKPGQLVNKSGQSLTVPESTYTSIQGDPQRSPSSCN) shows a compositional bias: polar residues. Phosphotyrosine; by FYN and LYN is present on Tyr317. Residues 317–320 (YSSV) form an interaction with CSK region. A Phosphoserine modification is found at Ser354. Tyr359 bears the Phosphotyrosine mark. Ser380 carries the phosphoserine modification. 2 positions are modified to phosphotyrosine: Tyr387 and Tyr417. The interval 430 to 432 (TRL) is interaction with NHERF1.

Interacts with FYN. When phosphorylated, interacts with CSK. Interacts with NHERF1/EBP50. In resting T-cells, part of a PAG1-NHERF1-MSN complex which is disrupted upon TCR activation. Interacts with LYN on plasma membrane lipid rafts. Identified in a complex with LYN and STAT3. Palmitoylated. Post-translationally, phosphorylated by FYN on Tyr-317 in resting T-cells; which promotes interaction with CSK. Dephosphorylated by PTPRC/CD45 upon TCR activation; which leads to CSK dissociation. May also be dephosphorylated by PTPN11. Hyperphosphorylated in mast cells upon FCER1 activation. Phosphorylated by LYN. Ubiquitously expressed. Present in germinal center B-cells, plasma cells, T-cells, monocytes and platelets (at protein level).

It is found in the cell membrane. Negatively regulates TCR (T-cell antigen receptor)-mediated signaling in T-cells and FCER1 (high affinity immunoglobulin epsilon receptor)-mediated signaling in mast cells. Promotes CSK activation and recruitment to lipid rafts, which results in LCK inhibition. Inhibits immunological synapse formation by preventing dynamic arrangement of lipid raft proteins. May be involved in cell adhesion signaling. The chain is Phosphoprotein associated with glycosphingolipid-enriched microdomains 1 (PAG1) from Homo sapiens (Human).